A 383-amino-acid chain; its full sequence is Transposase InsI for insertion sequence element IS30A (383 aa).

The Integrase catalytic domain occupies 213 to 379 (VNGTPIHERS…TPKEIIERGV (167 aa)).

It belongs to the transposase IS30 family.

Its function is as follows. Required for the transposition of the insertion element. This chain is Transposase InsI for insertion sequence element IS30A (insI1), found in Escherichia coli (strain K12).